The chain runs to 353 residues: Rhodopsin (353 aa).

The Extracellular segment spans residues 1–36 (MNGTEGPYFYVPMVNTSGIVRSPYEYPQYYLVNPAA). Residues Asn2 and Asn15 are each glycosylated (N-linked (GlcNAc...) asparagine). Residues 37–61 (YARLGAYMFLLILVGFPINFLTLYV) form a helical membrane-spanning segment. Over 62–73 (TIEHKKLRTPLN) the chain is Cytoplasmic. The chain crosses the membrane as a helical span at residues 74-96 (YILLNLAVADLFMVFGGFTTTMY). Over 97–110 (TSMHGYFVLGRLGC) the chain is Extracellular. A disulfide bond links Cys110 and Cys187. A helical transmembrane segment spans residues 111–133 (NIEGFFATLGGEIALWSLVVLAI). Positions 134–136 (ERW) match the 'Ionic lock' involved in activated form stabilization motif. Residues 134-152 (ERWVVVCKPISNFRFGENH) lie on the Cytoplasmic side of the membrane. Residues 153–173 (AIMGLAFTWLMALACAAPPLV) form a helical membrane-spanning segment. Residues 174–202 (GWSRYIPEGMQCSCGIDYYTRAEGFNNES) are Extracellular-facing. Asn200 carries N-linked (GlcNAc...) asparagine glycosylation. Residues 203–224 (FVIYMFVCHFTVPLMVVFFCYG) traverse the membrane as a helical segment. Residues 225–252 (RLLCAVKEAAAAQQESETTQRAEREVTR) lie on the Cytoplasmic side of the membrane. The chain crosses the membrane as a helical span at residues 253–274 (MVIMMVVAFLVCWLPYASVAWW). Residues 275–286 (IFTHQGSEFGPV) lie on the Extracellular side of the membrane. A helical transmembrane segment spans residues 287–308 (FMTIPAFFAKSSSIYNPMIYIC). Lys296 is subject to N6-(retinylidene)lysine. At 309-353 (LNKQFRHCMITTLCCGKNPFEEEEGASTASKTEASSVSSSSVSPA) the chain is on the cytoplasmic side. Residues Cys322 and Cys323 are each lipidated (S-palmitoyl cysteine). The interval 331-353 (EEGASTASKTEASSVSSSSVSPA) is disordered. Positions 334–353 (ASTASKTEASSVSSSSVSPA) are enriched in low complexity.

The protein belongs to the G-protein coupled receptor 1 family. Opsin subfamily. Phosphorylated on some or all of the serine and threonine residues present in the C-terminal region. In terms of processing, contains one covalently linked retinal chromophore.

Its subcellular location is the membrane. It is found in the cell projection. The protein resides in the cilium. It localises to the photoreceptor outer segment. Functionally, photoreceptor required for image-forming vision at low light intensity. While most salt water fish species use retinal as chromophore, most freshwater fish use 3-dehydroretinal, or a mixture of retinal and 3-dehydroretinal. Light-induced isomerization of 11-cis to all-trans retinal triggers a conformational change that activates signaling via G-proteins. Subsequent receptor phosphorylation mediates displacement of the bound G-protein alpha subunit by arrestin and terminates signaling. The protein is Rhodopsin (rho) of Sarpa salpa (Salema).